A 77-amino-acid chain; its full sequence is Acyl carrier protein (77 aa).

Residues 1 to 76 enclose the Carrier domain; it reads MATFDDVKAV…DVVNYIDNLK (76 aa). Serine 36 carries the O-(pantetheine 4'-phosphoryl)serine modification.

This sequence belongs to the acyl carrier protein (ACP) family. In terms of processing, 4'-phosphopantetheine is transferred from CoA to a specific serine of apo-ACP by AcpS. This modification is essential for activity because fatty acids are bound in thioester linkage to the sulfhydryl of the prosthetic group.

It localises to the cytoplasm. It participates in lipid metabolism; fatty acid biosynthesis. In terms of biological role, carrier of the growing fatty acid chain in fatty acid biosynthesis. This is Acyl carrier protein from Campylobacter jejuni (strain RM1221).